Consider the following 418-residue polypeptide: Light-independent protochlorophyllide reductase subunit N (418 aa).

3 residues coordinate [4Fe-4S] cluster: Cys-17, Cys-42, and Cys-103.

The protein belongs to the BchN/ChlN family. As to quaternary structure, protochlorophyllide reductase is composed of three subunits; ChlL, ChlN and ChlB. Forms a heterotetramer of two ChlB and two ChlN subunits. Requires [4Fe-4S] cluster as cofactor.

The enzyme catalyses chlorophyllide a + oxidized 2[4Fe-4S]-[ferredoxin] + 2 ADP + 2 phosphate = protochlorophyllide a + reduced 2[4Fe-4S]-[ferredoxin] + 2 ATP + 2 H2O. The protein operates within porphyrin-containing compound metabolism; chlorophyll biosynthesis (light-independent). Component of the dark-operative protochlorophyllide reductase (DPOR) that uses Mg-ATP and reduced ferredoxin to reduce ring D of protochlorophyllide (Pchlide) to form chlorophyllide a (Chlide). This reaction is light-independent. The NB-protein (ChlN-ChlB) is the catalytic component of the complex. The polypeptide is Light-independent protochlorophyllide reductase subunit N (Prochlorococcus marinus (strain AS9601)).